A 481-amino-acid polypeptide reads, in one-letter code: Bifunctional protein GlmU (481 aa).

The pyrophosphorylase stretch occupies residues 1 to 235; it reads MTHKERPLDV…PDEVMGANDR (235 aa). Residues 13-16, Lys27, Gln78, 83-84, 107-109, Gly146, Glu161, Asn176, and Asn233 contribute to the UDP-N-acetyl-alpha-D-glucosamine site; these read LAAG, GT, and YGD. Asp109 serves as a coordination point for Mg(2+). Asn233 lines the Mg(2+) pocket. Positions 236 to 256 are linker; that stretch reads VQLAQAAAVLRRRINTAHMQA. The tract at residues 257 to 481 is N-acetyltransferase; it reads GVTLQDPSTI…PWLAGWLERQ (225 aa). Arg339 and Lys357 together coordinate UDP-N-acetyl-alpha-D-glucosamine. His369 (proton acceptor) is an active-site residue. UDP-N-acetyl-alpha-D-glucosamine is bound by residues Tyr372 and Asn383. Acetyl-CoA contacts are provided by Ala386, Ser411, Ala429, and Arg446.

The protein in the N-terminal section; belongs to the N-acetylglucosamine-1-phosphate uridyltransferase family. It in the C-terminal section; belongs to the transferase hexapeptide repeat family. As to quaternary structure, homotrimer. Requires Mg(2+) as cofactor.

It is found in the cytoplasm. The catalysed reaction is alpha-D-glucosamine 1-phosphate + acetyl-CoA = N-acetyl-alpha-D-glucosamine 1-phosphate + CoA + H(+). It catalyses the reaction N-acetyl-alpha-D-glucosamine 1-phosphate + UTP + H(+) = UDP-N-acetyl-alpha-D-glucosamine + diphosphate. The protein operates within nucleotide-sugar biosynthesis; UDP-N-acetyl-alpha-D-glucosamine biosynthesis; N-acetyl-alpha-D-glucosamine 1-phosphate from alpha-D-glucosamine 6-phosphate (route II): step 2/2. Its pathway is nucleotide-sugar biosynthesis; UDP-N-acetyl-alpha-D-glucosamine biosynthesis; UDP-N-acetyl-alpha-D-glucosamine from N-acetyl-alpha-D-glucosamine 1-phosphate: step 1/1. It functions in the pathway bacterial outer membrane biogenesis; LPS lipid A biosynthesis. Functionally, catalyzes the last two sequential reactions in the de novo biosynthetic pathway for UDP-N-acetylglucosamine (UDP-GlcNAc). The C-terminal domain catalyzes the transfer of acetyl group from acetyl coenzyme A to glucosamine-1-phosphate (GlcN-1-P) to produce N-acetylglucosamine-1-phosphate (GlcNAc-1-P), which is converted into UDP-GlcNAc by the transfer of uridine 5-monophosphate (from uridine 5-triphosphate), a reaction catalyzed by the N-terminal domain. This Deinococcus geothermalis (strain DSM 11300 / CIP 105573 / AG-3a) protein is Bifunctional protein GlmU.